Consider the following 135-residue polypeptide: UPF0216 protein MTH_949 (135 aa).

This sequence belongs to the UPF0216 family.

The chain is UPF0216 protein MTH_949 from Methanothermobacter thermautotrophicus (strain ATCC 29096 / DSM 1053 / JCM 10044 / NBRC 100330 / Delta H) (Methanobacterium thermoautotrophicum).